A 209-amino-acid polypeptide reads, in one-letter code: Phosphoheptose isomerase (209 aa).

The region spanning 50 to 209 is the SIS domain; the sequence is IAETFRNGGK…ELVESMMGYA (160 aa). Residue 65-67 participates in substrate binding; that stretch reads NGG. 2 residues coordinate Zn(2+): H74 and E78. Residues E78, 109–110, 135–137, S140, and Q188 each bind substrate; these read ND and STS. 2 residues coordinate Zn(2+): Q188 and H196.

It belongs to the SIS family. GmhA subfamily. Zn(2+) is required as a cofactor.

Its subcellular location is the cytoplasm. It catalyses the reaction 2 D-sedoheptulose 7-phosphate = D-glycero-alpha-D-manno-heptose 7-phosphate + D-glycero-beta-D-manno-heptose 7-phosphate. It functions in the pathway carbohydrate biosynthesis; D-glycero-D-manno-heptose 7-phosphate biosynthesis; D-glycero-alpha-D-manno-heptose 7-phosphate and D-glycero-beta-D-manno-heptose 7-phosphate from sedoheptulose 7-phosphate: step 1/1. Catalyzes the isomerization of sedoheptulose 7-phosphate in D-glycero-D-manno-heptose 7-phosphate. In Chlorobaculum parvum (strain DSM 263 / NCIMB 8327) (Chlorobium vibrioforme subsp. thiosulfatophilum), this protein is Phosphoheptose isomerase.